A 361-amino-acid chain; its full sequence is Peptide chain release factor 1 (361 aa).

An N5-methylglutamine modification is found at glutamine 235.

This sequence belongs to the prokaryotic/mitochondrial release factor family. Methylated by PrmC. Methylation increases the termination efficiency of RF1.

The protein localises to the cytoplasm. Functionally, peptide chain release factor 1 directs the termination of translation in response to the peptide chain termination codons UAG and UAA. The polypeptide is Peptide chain release factor 1 (Chlamydia abortus (strain DSM 27085 / S26/3) (Chlamydophila abortus)).